We begin with the raw amino-acid sequence, 503 residues long: Probable cytosol aminopeptidase (503 aa).

Residues Lys274 and Asp279 each coordinate Mn(2+). The active site involves Lys286. Mn(2+)-binding residues include Asp297, Asp356, and Glu358. Arg360 is a catalytic residue.

This sequence belongs to the peptidase M17 family. Mn(2+) serves as cofactor.

The protein resides in the cytoplasm. The enzyme catalyses Release of an N-terminal amino acid, Xaa-|-Yaa-, in which Xaa is preferably Leu, but may be other amino acids including Pro although not Arg or Lys, and Yaa may be Pro. Amino acid amides and methyl esters are also readily hydrolyzed, but rates on arylamides are exceedingly low.. The catalysed reaction is Release of an N-terminal amino acid, preferentially leucine, but not glutamic or aspartic acids.. Functionally, presumably involved in the processing and regular turnover of intracellular proteins. Catalyzes the removal of unsubstituted N-terminal amino acids from various peptides. In Burkholderia orbicola (strain AU 1054), this protein is Probable cytosol aminopeptidase.